The chain runs to 48 residues: Delta-stichotoxin-She1a (48 aa).

3 disulfides stabilise this stretch: Cys3–Cys43, Cys5–Cys33, and Cys26–Cys44.

This sequence belongs to the sea anemone sodium channel inhibitory toxin family. Type II subfamily.

It is found in the secreted. Its subcellular location is the nematocyst. Functionally, binds specifically to voltage-gated sodium channels (Nav), thereby delaying their inactivation during signal transduction. Is highly toxic to crabs (by intrahemocoelic injection), but without effect upon mice (by intraperitoneal injection). The protein is Delta-stichotoxin-She1a of Stichodactyla helianthus (Sun anemone).